A 571-amino-acid polypeptide reads, in one-letter code: Arginine--tRNA ligase (571 aa).

A 'HIGH' region motif is present at residues Pro-122–His-132.

The protein belongs to the class-I aminoacyl-tRNA synthetase family. As to quaternary structure, monomer.

It is found in the cytoplasm. The enzyme catalyses tRNA(Arg) + L-arginine + ATP = L-arginyl-tRNA(Arg) + AMP + diphosphate. This is Arginine--tRNA ligase from Buchnera aphidicola subsp. Cinara cedri (strain Cc).